Consider the following 87-residue polypeptide: RNA-binding protein Hfq (87 aa).

Positions 9 to 68 (DPFLNALRRERIPVSIYLVNGIKLQGQIESFDQFVILLKNTVSQMVYKHAISTVVPARAV) constitute a Sm domain.

The protein belongs to the Hfq family. In terms of assembly, homohexamer.

RNA chaperone that binds small regulatory RNA (sRNAs) and mRNAs to facilitate mRNA translational regulation in response to envelope stress, environmental stress and changes in metabolite concentrations. Also binds with high specificity to tRNAs. The polypeptide is RNA-binding protein Hfq (Aeromonas salmonicida (strain A449)).